Consider the following 176-residue polypeptide: ATP-dependent protease subunit HslV (176 aa).

Threonine 2 is a catalytic residue. The Na(+) site is built by glycine 157, cysteine 160, and threonine 163.

The protein belongs to the peptidase T1B family. HslV subfamily. As to quaternary structure, a double ring-shaped homohexamer of HslV is capped on each side by a ring-shaped HslU homohexamer. The assembly of the HslU/HslV complex is dependent on binding of ATP.

Its subcellular location is the cytoplasm. It carries out the reaction ATP-dependent cleavage of peptide bonds with broad specificity.. Allosterically activated by HslU binding. Protease subunit of a proteasome-like degradation complex believed to be a general protein degrading machinery. The polypeptide is ATP-dependent protease subunit HslV (Marinobacter nauticus (strain ATCC 700491 / DSM 11845 / VT8) (Marinobacter aquaeolei)).